An 84-amino-acid polypeptide reads, in one-letter code: MAIVQHLFGITMQNSANLEQRIAELEMKITFQEGIIEELNQALIEQQFVIDKMQLQMRHVANKLKDLQPANIATQAEETPPPHY.

The protein belongs to the SlyX family.

In Mannheimia succiniciproducens (strain KCTC 0769BP / MBEL55E), this protein is Protein SlyX homolog.